Consider the following 537-residue polypeptide: Arginine--tRNA ligase (537 aa).

A 'HIGH' region motif is present at residues 113–123 (ANPTGELHLGH).

The protein belongs to the class-I aminoacyl-tRNA synthetase family. In terms of assembly, monomer.

The protein localises to the cytoplasm. The catalysed reaction is tRNA(Arg) + L-arginine + ATP = L-arginyl-tRNA(Arg) + AMP + diphosphate. The sequence is that of Arginine--tRNA ligase (argS) from Mycoplasma pneumoniae (strain ATCC 29342 / M129 / Subtype 1) (Mycoplasmoides pneumoniae).